The following is a 351-amino-acid chain: Dihydroorotate dehydrogenase (quinone) (351 aa).

FMN is bound by residues 65–69 and T89; that span reads AGLDK. Position 69 (K69) interacts with substrate. 114-118 provides a ligand contact to substrate; that stretch reads NRLGF. The FMN site is built by N150 and N183. Residue N183 participates in substrate binding. The active-site Nucleophile is S186. Substrate is bound at residue N188. Positions 228 and 256 each coordinate FMN. 257–258 lines the substrate pocket; sequence NT. FMN is bound by residues G279, G308, and 329-330; that span reads YT.

Belongs to the dihydroorotate dehydrogenase family. Type 2 subfamily. Monomer. FMN is required as a cofactor.

The protein resides in the cell membrane. The catalysed reaction is (S)-dihydroorotate + a quinone = orotate + a quinol. It functions in the pathway pyrimidine metabolism; UMP biosynthesis via de novo pathway; orotate from (S)-dihydroorotate (quinone route): step 1/1. In terms of biological role, catalyzes the conversion of dihydroorotate to orotate with quinone as electron acceptor. This Acidovorax sp. (strain JS42) protein is Dihydroorotate dehydrogenase (quinone).